The chain runs to 151 residues: Ribosome maturation factor RimP (151 aa).

Belongs to the RimP family.

It localises to the cytoplasm. Functionally, required for maturation of 30S ribosomal subunits. This chain is Ribosome maturation factor RimP, found in Haemophilus influenzae (strain PittGG).